We begin with the raw amino-acid sequence, 860 residues long: DNA mismatch repair protein MutS (860 aa).

607 to 614 is a binding site for ATP; the sequence is GPNMSGKS.

Belongs to the DNA mismatch repair MutS family.

Its function is as follows. This protein is involved in the repair of mismatches in DNA. It is possible that it carries out the mismatch recognition step. This protein has a weak ATPase activity. The chain is DNA mismatch repair protein MutS from Listeria monocytogenes serotype 4b (strain CLIP80459).